Consider the following 1115-residue polypeptide: PAN2-PAN3 deadenylation complex catalytic subunit PAN2 (1115 aa).

5 WD repeats span residues 27-66 (NRDK…YTRY), 112-153 (AAFS…GCLD), 155-194 (LLNY…TIKS), 197-236 (AHSA…YDLR), and 295-334 (HPCQ…MGMF). The linker stretch occupies residues 337 to 473 (TPEMLAYPDY…IQTYTSINKY (137 aa)). Residues 474–855 (EVPPAYSRLP…TPEIIIYCDA (382 aa)) form the USP domain. 4 residues coordinate Zn(2+): Cys660, His662, Cys713, and Cys716. The 173-residue stretch at 907 to 1079 (VAIDAEFVSL…EDAHTALILY (173 aa)) folds into the Exonuclease domain. A divalent metal cation is bound by residues Asp910, Glu912, Asp1020, and Asp1071.

The protein belongs to the peptidase C19 family. PAN2 subfamily. As to quaternary structure, forms a heterotrimer with an asymmetric homodimer of the regulatory subunit PAN3 to form the poly(A)-nuclease (PAN) deadenylation complex. Requires a divalent metal cation as cofactor.

It is found in the cytoplasm. It catalyses the reaction Exonucleolytic cleavage of poly(A) to 5'-AMP.. Positively regulated by the regulatory subunit PAN3. Negatively regulated by PAB1-binding protein PBP1. Inhibited under stress conditions. Inhibition of deadenylation under stress increases mRNA stability, which may be a mechanism to retain the majority of the cytoplasmic pool of mRNAs for later reuse and recovery from stress. Its function is as follows. Catalytic subunit of the poly(A)-nuclease (PAN) deadenylation complex, one of two cytoplasmic mRNA deadenylases involved in mRNA turnover. PAN specifically shortens poly(A) tails of RNA and the activity is stimulated by poly(A)-binding protein PAB1. PAN deadenylation is followed by rapid degradation of the shortened mRNA tails by the CCR4-NOT complex. Deadenylated mRNAs are then degraded by two alternative mechanisms, namely exosome-mediated 3'-5' exonucleolytic degradation, or deadenylation-dependent mRNA decaping by DCP1-DCP2 and subsequent 5'-3' exonucleolytic degradation by XRN1. May also be involved in post-transcriptional maturation of mRNA poly(A) tails, trimming the tails from their synthesized length to the slightly shorter, apparently messenger-specific length found on newly exported mRNAs. PAN cooperates with protein kinase DUN1 in the regulation of RAD5 mRNA levels and cell survival in response to replicational stress. The sequence is that of PAN2-PAN3 deadenylation complex catalytic subunit PAN2 from Saccharomyces cerevisiae (strain ATCC 204508 / S288c) (Baker's yeast).